A 75-amino-acid polypeptide reads, in one-letter code: Toxin-like peptide AaF1CA7 (75 aa).

The first 22 residues, 1–22 (MMKLMLFSIIVILFSLIGSIHG), serve as a signal peptide directing secretion. An LCN-type CS-alpha/beta domain is found at 25-75 (VPGNYPLDSSDDTYLCAPLGENPSCIQICRKHGVKYGYCYAFQCWCEYFGR). 3 cysteine pairs are disulfide-bonded: Cys-40–Cys-63, Cys-49–Cys-68, and Cys-53–Cys-70.

This sequence belongs to the long (3 C-C) scorpion toxin superfamily. Expressed by the venom gland.

The protein resides in the secreted. Functionally, probable neurotoxin that inhibits ion channels. The sequence is that of Toxin-like peptide AaF1CA7 from Androctonus australis (Sahara scorpion).